The chain runs to 342 residues: Uroporphyrinogen decarboxylase (342 aa).

Residues arginine 24 to arginine 28, aspartate 74, tyrosine 149, serine 204, and histidine 319 each bind substrate.

Belongs to the uroporphyrinogen decarboxylase family. In terms of assembly, homodimer.

The protein localises to the cytoplasm. The catalysed reaction is uroporphyrinogen III + 4 H(+) = coproporphyrinogen III + 4 CO2. It functions in the pathway porphyrin-containing compound metabolism; protoporphyrin-IX biosynthesis; coproporphyrinogen-III from 5-aminolevulinate: step 4/4. Its function is as follows. Catalyzes the decarboxylation of four acetate groups of uroporphyrinogen-III to yield coproporphyrinogen-III. This Chelativorans sp. (strain BNC1) protein is Uroporphyrinogen decarboxylase.